The primary structure comprises 263 residues: ESGMGKTHLLKAAKNYIESNFFDLKVSYMSGDEFARKAVDILQKTHKEIEQFKNEVCQNDVLIIDDVQFLSYKEKTNEIFFTIFNNFIENDKQLFFSSDKSPELLNGFDNRLITRFNMGLSIAIQKLDNKTATAIIKKEIKNQNIKSEVTSEAINFISNYYSDDVRKIKGSVSRLNFWSQQNPEEKIITIEIISDLFRDIPTSKLGILNVKKIKEVVSEKYGISVNAIDGKARSKSIVTARHIAMFLTKEILNHTLAQIGEEF.

A region of interest (domain I, interacts with DnaA modulators) is located at residue Glu-1. Residue Glu-1 is a region of interest, domain II. Positions 1–179 (ESGMGKTHLL…GSVSRLNFWS (179 aa)) are domain III, AAA+ region. ATP contacts are provided by Gly-3, Gly-5, Lys-6, and Thr-7. The interval 180–263 (QQNPEEKIIT…HTLAQIGEEF (84 aa)) is domain IV, binds dsDNA.

It belongs to the DnaA family. In terms of assembly, oligomerizes as a right-handed, spiral filament on DNA at oriC.

The protein resides in the cytoplasm. Functionally, plays an essential role in the initiation and regulation of chromosomal replication. ATP-DnaA binds to the origin of replication (oriC) to initiate formation of the DNA replication initiation complex once per cell cycle. Binds the DnaA box (a 9 base pair repeat at the origin) and separates the double-stranded (ds)DNA. Forms a right-handed helical filament on oriC DNA; dsDNA binds to the exterior of the filament while single-stranded (ss)DNA is stabiized in the filament's interior. The ATP-DnaA-oriC complex binds and stabilizes one strand of the AT-rich DNA unwinding element (DUE), permitting loading of DNA polymerase. After initiation quickly degrades to an ADP-DnaA complex that is not apt for DNA replication. Binds acidic phospholipids. The polypeptide is Chromosomal replication initiator protein DnaA (Mycoplasma mycoides).